A 692-amino-acid polypeptide reads, in one-letter code: Protein artemis (692 aa).

Thr380 carries the post-translational modification Phosphothreonine. Ser385 is modified (phosphoserine). 2 disordered regions span residues 503 to 555 (RLEN…DSQS) and 640 to 660 (STNA…PEAE). Residues 507 to 520 (FPSSTEAGGSQSPK) show a composition bias toward polar residues. Residues 530 to 543 (THISSQNSSQSTHI) are compositionally biased toward low complexity. Polar residues-rich tracts occupy residues 544-555 (TEQGSQGWDSQS) and 640-650 (STNADSQSSSD). Position 645 is a phosphoserine; by ATM (Ser645).

Belongs to the DNA repair metallo-beta-lactamase (DRMBL) family. As to quaternary structure, interacts with LIG4; the interaction is direct. Interacts with ATM. Interacts with BRCA1. Interacts with PRKDC. Interacts with TP53BP1. Also exhibits ATM- and phosphorylation-dependent interaction with the MRN complex, composed of MRE11, RAD50, and NBN. Phosphorylation on undefined residues by PRKDC may stimulate endonucleolytic activity on 5' and 3' hairpins and overhangs. PRKDC must remain present, even after phosphorylation, for efficient hairpin opening. Also phosphorylated by ATM in response to ionizing radiation (IR) and by ATR in response to ultraviolet (UV) radiation.

The protein resides in the nucleus. Functionally, required for V(D)J recombination, the process by which exons encoding the antigen-binding domains of immunoglobulins and T-cell receptor proteins are assembled from individual V, (D), and J gene segments. V(D)J recombination is initiated by the lymphoid specific RAG endonuclease complex, which generates site specific DNA double strand breaks (DSBs). These DSBs present two types of DNA end structures: hairpin sealed coding ends and phosphorylated blunt signal ends. These ends are independently repaired by the non homologous end joining (NHEJ) pathway to form coding and signal joints respectively. This protein exhibits single-strand specific 5'-3' exonuclease activity in isolation, and acquires endonucleolytic activity on 5' and 3' hairpins and overhangs when in a complex with PRKDC. The latter activity is required specifically for the resolution of closed hairpins prior to the formation of the coding joint. May also be required for the repair of complex DSBs induced by ionizing radiation, which require substantial end-processing prior to religation by NHEJ. This Pongo abelii (Sumatran orangutan) protein is Protein artemis (DCLRE1C).